We begin with the raw amino-acid sequence, 221 residues long: Serine/arginine-rich splicing factor 9 (221 aa).

RRM domains are found at residues 14–89 (GRIY…FPRT) and 111–187 (FRVL…PERS). A Glycyl lysine isopeptide (Lys-Gly) (interchain with G-Cter in SUMO2) cross-link involves residue lysine 36. Positions 188 to 200 (TSYGYSRSRSGSR) are interaction with SAFB1. Serine 189 is modified (phosphoserine). Residues 189 to 198 (SYGYSRSRSG) are compositionally biased toward low complexity. Positions 189–221 (SYGYSRSRSGSRGRDSPYQSRGSPHYFSPFRPY) are disordered. At tyrosine 192 the chain carries Phosphotyrosine. Phosphoserine is present on residues serine 193, serine 195, serine 204, serine 208, and serine 211. Tyrosine 214 carries the phosphotyrosine modification. A Phosphoserine modification is found at serine 216.

This sequence belongs to the splicing factor SR family. As to quaternary structure, interacts with KHDRBS3. Interacts with HABP4. Interacts with NOL3/ARC/NOP30. Interacts with NSEP1/YB-1/YB1. Interacts with SAFB/SAFB1. Interacts with SRSF6/SFRS6. Interacts with TRA2B/SFRS10. Interacts with C1QBP. May also interact with DUSP11/PIR1. Extensively phosphorylated on serine residues in the RS domain. As to expression, expressed at high levels in the heart, kidney, pancreas and placenta, and at lower levels in the brain, liver, lung and skeletal muscle.

Its subcellular location is the nucleus. Plays a role in constitutive splicing and can modulate the selection of alternative splice sites. Represses the splicing of MAPT/Tau exon 10. The polypeptide is Serine/arginine-rich splicing factor 9 (SRSF9) (Homo sapiens (Human)).